The chain runs to 142 residues: MAP3K7 C-terminal-like protein (142 aa).

As to expression, detected in lung and peripheral blood leukocytes. Expressed predominantly in peripheral blood leukocytes and ubiquitously in adult and fetal tissues. Also expressed strongly in breast carcinoma GI-101, colon adenocarcinoma GI-112, and prostatic adenocarcinoma PC3.

The chain is MAP3K7 C-terminal-like protein (MAP3K7CL) from Homo sapiens (Human).